The chain runs to 632 residues: tRNA uridine 5-carboxymethylaminomethyl modification enzyme MnmG (632 aa).

Residues 15-20 (GAGHAG), I127, and S182 each bind FAD. An NAD(+)-binding site is contributed by 276–290 (GPRYCPSIEDKIVRF). Residue Q373 coordinates FAD.

This sequence belongs to the MnmG family. In terms of assembly, homodimer. Heterotetramer of two MnmE and two MnmG subunits. It depends on FAD as a cofactor.

The protein localises to the cytoplasm. NAD-binding protein involved in the addition of a carboxymethylaminomethyl (cmnm) group at the wobble position (U34) of certain tRNAs, forming tRNA-cmnm(5)s(2)U34. The chain is tRNA uridine 5-carboxymethylaminomethyl modification enzyme MnmG from Streptococcus pyogenes serotype M18 (strain MGAS8232).